Reading from the N-terminus, the 489-residue chain is MSQTESTKGVKITNYAAIKNAPLPADGPGAKNFSNWLLLGLLTGVPLFVTRKFHGGLKTFIFFFILFAIPILMAYWTVLSSYSPRLNEKVQFPNRGVEHYLKFHDDQLAARYQGQNKIPMETFHELYFEGKVSFKGDALDALEYRHDWASFRFTLSLFRFFLLGMIPEVIMHSRSQDEEQVRDHYDRGDDFYSWFLGDRMVYTSGLISDVNKDESLEELQDNKLKTVCEKIQLKEGEYLLDLGCGWGTLAAFASSQYGAKVTGITLGKNQTKYGNDKIASFGVDEKQSRILCHDYRDTPLPKDENGNTTKYDKITCLEMAEHVGVRKFRSFLQQVYDMLDDDGVFFLQYAGLRKSWQYEDLIWGLFMNKYIFPGADASTPLDFVVSALEATGFETVSIDNIGVHYSATLYRWYKNWLSNRDNVVNKYGIKWFKIWEYFLASSTIISRQGSATCYQIVLRKNLNSYDRAGYISTQEGLQGPISRKTDWVK.

2 helical membrane passes run G29–V49 and T59–L79. S-adenosyl-L-methionine-binding positions include Y202–T203, L239–G247, T265–Q270, and Y295–R296.

It belongs to the CFA/CMAS family.

It is found in the membrane. It carries out the reaction a (4E,8E)-4-sphinga-4,8-dienine ceramide + S-adenosyl-L-methionine = a 9-methyl-(4E,8E)-sphinga-4,8-dienine ceramide + S-adenosyl-L-homocysteine + H(+). The protein operates within lipid metabolism; sphingolipid metabolism. In terms of biological role, catalyzes methylation of the sphingoid base component of glucosylceramides (GluCers) at the C9-position. Sphingolipid C9-methylation requires 4,8-desaturated ceramides as substrates. Glucosylceramides play important roles in growth, differentiation and pathogenicity. The methyl group at the C9-position distinguishes fungal glucosylceramides from those of plants and animals, and may thus play a role in host-pathogen interactions enabling the host to recognize the fungal attack and initiate specific defense responses. The protein is Sphingolipid C9-methyltransferase of Komagataella phaffii (strain GS115 / ATCC 20864) (Yeast).